A 279-amino-acid polypeptide reads, in one-letter code: Pantothenate synthetase (279 aa).

27-34 (MGYLHEGH) contributes to the ATP binding site. His34 functions as the Proton donor in the catalytic mechanism. Gln58 serves as a coordination point for (R)-pantoate. Gln58 is a beta-alanine binding site. 144–147 (GKKD) is an ATP binding site. Gln150 lines the (R)-pantoate pocket. ATP-binding positions include Val173 and 181 to 184 (MSSR).

The protein belongs to the pantothenate synthetase family. In terms of assembly, homodimer.

It is found in the cytoplasm. The enzyme catalyses (R)-pantoate + beta-alanine + ATP = (R)-pantothenate + AMP + diphosphate + H(+). Its pathway is cofactor biosynthesis; (R)-pantothenate biosynthesis; (R)-pantothenate from (R)-pantoate and beta-alanine: step 1/1. In terms of biological role, catalyzes the condensation of pantoate with beta-alanine in an ATP-dependent reaction via a pantoyl-adenylate intermediate. This chain is Pantothenate synthetase, found in Geobacter sp. (strain M21).